Consider the following 387-residue polypeptide: Phosphoglycerate kinase (387 aa).

Residues 21 to 23, Arg36, and 59 to 62 contribute to the substrate site; these read DLN and HLGR. Lys84 carries the post-translational modification N6-acetyllysine. The substrate site is built by Arg113 and Arg146. ATP contacts are provided by residues Lys197, Glu314, and 340–343; that span reads GGDT.

Belongs to the phosphoglycerate kinase family. Monomer.

The protein resides in the cytoplasm. It catalyses the reaction (2R)-3-phosphoglycerate + ATP = (2R)-3-phospho-glyceroyl phosphate + ADP. It functions in the pathway carbohydrate degradation; glycolysis; pyruvate from D-glyceraldehyde 3-phosphate: step 2/5. The protein is Phosphoglycerate kinase (pgk) of Escherichia coli O157:H7.